Reading from the N-terminus, the 337-residue chain is Biotin synthase (337 aa).

Residues 52-281 form the Radical SAM core domain; it reads ADIQRASLLS…RSRVRLSAGR (230 aa). Residues C67, C71, and C74 each coordinate [4Fe-4S] cluster. Residues C112, C144, C204, and R276 each coordinate [2Fe-2S] cluster.

Belongs to the radical SAM superfamily. Biotin synthase family. In terms of assembly, homodimer. Requires [4Fe-4S] cluster as cofactor. The cofactor is [2Fe-2S] cluster.

The catalysed reaction is (4R,5S)-dethiobiotin + (sulfur carrier)-SH + 2 reduced [2Fe-2S]-[ferredoxin] + 2 S-adenosyl-L-methionine = (sulfur carrier)-H + biotin + 2 5'-deoxyadenosine + 2 L-methionine + 2 oxidized [2Fe-2S]-[ferredoxin]. It functions in the pathway cofactor biosynthesis; biotin biosynthesis; biotin from 7,8-diaminononanoate: step 2/2. Its function is as follows. Catalyzes the conversion of dethiobiotin (DTB) to biotin by the insertion of a sulfur atom into dethiobiotin via a radical-based mechanism. In Methylobacterium radiotolerans (strain ATCC 27329 / DSM 1819 / JCM 2831 / NBRC 15690 / NCIMB 10815 / 0-1), this protein is Biotin synthase.